Here is a 461-residue protein sequence, read N- to C-terminus: Photosystem II CP43 reaction center protein (461 aa).

Residues 1–2 (ME) constitute a propeptide that is removed on maturation. The residue at position 3 (Thr3) is an N-acetylthreonine. Thr3 is modified (phosphothreonine). The next 5 membrane-spanning stretches (helical) occupy residues 57 to 81 (LFEVAHFVPEKPMYEQGLILLPHLA), 122 to 143 (LLGPETLEESFPFFGYVWKDRN), 166 to 188 (KASYFGGIYDTWAPGGGDVRKIT), 243 to 263 (KPFAWARRALVWSGEAYLSYS), and 279 to 300 (WFNNTAYPSEFYGPTGPEASQA). Position 355 (Glu355) interacts with [CaMn4O5] cluster. The helical transmembrane segment at 435 to 459 (RARAAAAGFEKGIDRDFEPVLSMTP) threads the bilayer.

This sequence belongs to the PsbB/PsbC family. PsbC subfamily. As to quaternary structure, PSII is composed of 1 copy each of membrane proteins PsbA, PsbB, PsbC, PsbD, PsbE, PsbF, PsbH, PsbI, PsbJ, PsbK, PsbL, PsbM, PsbT, PsbX, PsbY, PsbZ, Psb30/Ycf12, at least 3 peripheral proteins of the oxygen-evolving complex and a large number of cofactors. It forms dimeric complexes. Binds multiple chlorophylls and provides some of the ligands for the Ca-4Mn-5O cluster of the oxygen-evolving complex. It may also provide a ligand for a Cl- that is required for oxygen evolution. PSII binds additional chlorophylls, carotenoids and specific lipids. is required as a cofactor.

The protein resides in the plastid. It is found in the chloroplast thylakoid membrane. One of the components of the core complex of photosystem II (PSII). It binds chlorophyll and helps catalyze the primary light-induced photochemical processes of PSII. PSII is a light-driven water:plastoquinone oxidoreductase, using light energy to abstract electrons from H(2)O, generating O(2) and a proton gradient subsequently used for ATP formation. The sequence is that of Photosystem II CP43 reaction center protein from Lotus japonicus (Lotus corniculatus var. japonicus).